We begin with the raw amino-acid sequence, 473 residues long: Psoralen synthase (473 aa).

Residues 1–17 (YFFPLFLVTIFLYKWLV) traverse the membrane as a helical segment. Positions 350–355 (TAPLLV) are substrate specificity. Position 425 (Cys425) interacts with heme.

This sequence belongs to the cytochrome P450 family. Requires heme as cofactor.

It is found in the microsome membrane. The enzyme catalyses (7S)-marmesin + reduced [NADPH--hemoprotein reductase] + O2 = psoralen + acetone + oxidized [NADPH--hemoprotein reductase] + 2 H2O + H(+). The protein operates within secondary metabolite biosynthesis. Involved in the biosynthesis of coumarins and furanocoumarins (FCs), natural products required for defense responses against attacks by predators with potential medical and agroindustrial usages such as anticoagulant, rodenticide and artificial vanilla substitutes. Involved in linear furanocumarin (psoralen) biosynthesis. Converts marmesin to psoralen and, with much lower affinity, 5-hydroxymarmesin to bergaptol. This is Psoralen synthase from Pastinaca sativa (Wild parsnip).